The following is a 214-amino-acid chain: Zinc finger protein 11 (214 aa).

The tract at residues 1–27 is disordered; the sequence is MKRTHLASFSNRDKTQEEEGEDGNGDN. A C2H2-type zinc finger spans residues 49–71; it reads YTCSFCRREFRSAQALGGHMNVH. Positions 72–79 match the Nuclear localization signal motif; the sequence is RRDRAKLR. The segment at 89–130 is disordered; it reads HHHTPIANPNPNFSSSSSSSTTTAHLEPSLTNQRSKTTPFPS. A compositionally biased stretch (low complexity) spans 102–111; the sequence is SSSSSSSTTT. Positions 117 to 128 are enriched in polar residues; the sequence is SLTNQRSKTTPF.

In terms of tissue distribution, expressed in roots, stems, axillary buds and flowers.

It localises to the nucleus. Its function is as follows. Probable transcription factor that may regulate cell division and growth. This chain is Zinc finger protein 11, found in Arabidopsis thaliana (Mouse-ear cress).